A 357-amino-acid polypeptide reads, in one-letter code: Outer membrane protein YedS (357 aa).

Residues 1 to 21 (MKRKVLAMLVPALLVAGAANA) form the signal peptide.

Belongs to the Gram-negative porin family.

It is found in the cell outer membrane. Functionally, forms pores that allow passive diffusion of small molecules across the outer membrane. Plays a role in resistance to carbapenems; this carbapenem-resistant, noncarbapenemase-producing clinical isolate has a deletion in ompF and a mutated marR gene that does not induce expression of this protein. However if this gene is overexpressed, or if wild-type marR is introduced, this leads to decreased resistance to the carbapenem antibiotics ertapenem, imipenem and meropenem. The sequence is that of Outer membrane protein YedS from Escherichia coli.